Reading from the N-terminus, the 133-residue chain is Nickel-responsive regulator (133 aa).

Residues His76, His87, His89, and Cys95 each contribute to the Ni(2+) site.

It belongs to the transcriptional regulatory CopG/NikR family. As to quaternary structure, homotetramer. Ni(2+) serves as cofactor.

Its function is as follows. Transcriptional repressor of the nikABCDE operon. Is active in the presence of excessive concentrations of intracellular nickel. The chain is Nickel-responsive regulator from Escherichia fergusonii (strain ATCC 35469 / DSM 13698 / CCUG 18766 / IAM 14443 / JCM 21226 / LMG 7866 / NBRC 102419 / NCTC 12128 / CDC 0568-73).